Consider the following 1672-residue polypeptide: Probable outer membrane protein PmpB (1672 aa).

A signal peptide spans 1–14 (MSSMKWLSATAVFA). 4 disordered regions span residues 69-122 (IPVK…GGAF), 203-263 (NTAE…GSGG), 384-415 (EAQT…AKGG), and 734-765 (STGV…PAPA). Composition is skewed to low complexity over residues 77-88 (DDSSTSTPTTSS), 100-111 (SSSSSPNSGDTS), and 203-234 (NTAE…SKVQ). 2 stretches are compositionally biased toward polar residues: residues 235–256 (SLFT…QTPS) and 384–399 (EAQT…SQSG). Residues 734 to 744 (STGVATTATTS) show a composition bias toward low complexity. The Autotransporter domain maps to 1379–1672 (DDAAYNNFWV…MTSCGARMIF (294 aa)).

This sequence belongs to the PMP outer membrane protein family.

The protein localises to the secreted. Its subcellular location is the cell wall. It localises to the cell outer membrane. This chain is Probable outer membrane protein PmpB (pmpB), found in Chlamydia muridarum (strain MoPn / Nigg).